Consider the following 161-residue polypeptide: 18.5 kDa class I heat shock protein (161 aa).

Positions 47 to 161 (ENSAFVSTRV…PDVKAIEISG (115 aa)) constitute a sHSP domain.

This sequence belongs to the small heat shock protein (HSP20) family. As to quaternary structure, forms oligomeric structures.

It localises to the cytoplasm. The protein is 18.5 kDa class I heat shock protein (HSP18.5-C) of Glycine max (Soybean).